The sequence spans 240 residues: Uridylate kinase (240 aa).

An ATP-binding site is contributed by 12 to 15 (KLSG). Residues 20–25 (GEQGFG) are involved in allosteric activation by GTP. G54 contacts UMP. Residues G55 and R59 each contribute to the ATP site. Residues D74 and 135 to 142 (TGNPYFST) contribute to the UMP site. ATP contacts are provided by N163, Y169, and D172.

Belongs to the UMP kinase family. Homohexamer.

It localises to the cytoplasm. It catalyses the reaction UMP + ATP = UDP + ADP. The protein operates within pyrimidine metabolism; CTP biosynthesis via de novo pathway; UDP from UMP (UMPK route): step 1/1. Its activity is regulated as follows. Allosterically activated by GTP. Inhibited by UTP. Catalyzes the reversible phosphorylation of UMP to UDP. This Bacillus anthracis protein is Uridylate kinase.